The chain runs to 395 residues: Chaperone protein DnaJ (395 aa).

In terms of domain architecture, J spans 4–69 (DYYEVLGVGR…DKRRRYDQFG (66 aa)). A CR-type zinc finger spans residues 152 to 233 (GVEKTLKIKK…CHGEGIKQGE (82 aa)). Zn(2+) contacts are provided by cysteine 165, cysteine 168, cysteine 181, cysteine 184, cysteine 207, cysteine 210, cysteine 221, and cysteine 224. CXXCXGXG motif repeat units follow at residues 165 to 172 (CDVCNGTG), 181 to 188 (CPTCQGTG), 207 to 214 (CPTCGGEG), and 221 to 228 (CTACHGEG).

It belongs to the DnaJ family. Homodimer. The cofactor is Zn(2+).

Its subcellular location is the cytoplasm. Its function is as follows. Participates actively in the response to hyperosmotic and heat shock by preventing the aggregation of stress-denatured proteins and by disaggregating proteins, also in an autonomous, DnaK-independent fashion. Unfolded proteins bind initially to DnaJ; upon interaction with the DnaJ-bound protein, DnaK hydrolyzes its bound ATP, resulting in the formation of a stable complex. GrpE releases ADP from DnaK; ATP binding to DnaK triggers the release of the substrate protein, thus completing the reaction cycle. Several rounds of ATP-dependent interactions between DnaJ, DnaK and GrpE are required for fully efficient folding. Also involved, together with DnaK and GrpE, in the DNA replication of plasmids through activation of initiation proteins. The protein is Chaperone protein DnaJ of Prosthecochloris aestuarii (strain DSM 271 / SK 413).